Reading from the N-terminus, the 158-residue chain is Transcriptional repressor NrdR (158 aa).

A zinc finger lies at 3-34 (CPYCGFEESKVVDSRSTEDHKAIRRRRECLKC). Positions 49–139 (VLVIKRDSNR…VYRQFKDINT (91 aa)) constitute an ATP-cone domain.

Belongs to the NrdR family. It depends on Zn(2+) as a cofactor.

Its function is as follows. Negatively regulates transcription of bacterial ribonucleotide reductase nrd genes and operons by binding to NrdR-boxes. This chain is Transcriptional repressor NrdR, found in Clostridium novyi (strain NT).